A 138-amino-acid polypeptide reads, in one-letter code: Acyl carrier protein 1, chloroplastic (138 aa).

The N-terminal 56 residues, 1-56, are a transit peptide targeting the chloroplast; that stretch reads MASLSATTTVRVQPSSSSLHKLSQGNGRCSSIVCLDWGKSSFPTLRTSRRRSFISA. One can recognise a Carrier domain in the interval 59 to 134; sequence KETIDKVCDI…QAADVIESLL (76 aa). An O-(pantetheine 4'-phosphoryl)serine modification is found at Ser-94.

Belongs to the acyl carrier protein (ACP) family. Post-translationally, 4'-phosphopantetheine is transferred from CoA to a specific serine of apo-ACP by acpS. This modification is essential for activity because fatty acids are bound in thioester linkage to the sulfhydryl of the prosthetic group.

The protein localises to the plastid. It is found in the chloroplast. It functions in the pathway lipid metabolism; fatty acid biosynthesis. Functionally, carrier of the growing fatty acid chain in fatty acid biosynthesis. This chain is Acyl carrier protein 1, chloroplastic (ACL1.1), found in Spinacia oleracea (Spinach).